A 274-amino-acid chain; its full sequence is tRNA-cytidine(32) 2-sulfurtransferase (274 aa).

The PP-loop motif signature appears at 40 to 45 (SGGKDS). [4Fe-4S] cluster-binding residues include Cys-115, Cys-118, and Cys-206.

Belongs to the TtcA family. As to quaternary structure, homodimer. Mg(2+) is required as a cofactor. Requires [4Fe-4S] cluster as cofactor.

The protein resides in the cytoplasm. It catalyses the reaction cytidine(32) in tRNA + S-sulfanyl-L-cysteinyl-[cysteine desulfurase] + AH2 + ATP = 2-thiocytidine(32) in tRNA + L-cysteinyl-[cysteine desulfurase] + A + AMP + diphosphate + H(+). Its pathway is tRNA modification. In terms of biological role, catalyzes the ATP-dependent 2-thiolation of cytidine in position 32 of tRNA, to form 2-thiocytidine (s(2)C32). The sulfur atoms are provided by the cysteine/cysteine desulfurase (IscS) system. The protein is tRNA-cytidine(32) 2-sulfurtransferase of Pseudomonas aeruginosa (strain LESB58).